A 704-amino-acid chain; its full sequence is Probable serine/threonine-protein kinase WNK1 (704 aa).

Residues 27–284 enclose the Protein kinase domain; it reads GRYNDVLGKG…ARELLKDPFL (258 aa). ATP is bound by residues 107 to 110 and lysine 157; that span reads TEMF. Aspartate 174 (proton acceptor) is an active-site residue. The segment at 499 to 521 is disordered; sequence QTDLQDSGGSSDDGGGQTQHVKD.

This sequence belongs to the protein kinase superfamily. Ser/Thr protein kinase family. WNK subfamily.

It carries out the reaction L-seryl-[protein] + ATP = O-phospho-L-seryl-[protein] + ADP + H(+). The catalysed reaction is L-threonyl-[protein] + ATP = O-phospho-L-threonyl-[protein] + ADP + H(+). The sequence is that of Probable serine/threonine-protein kinase WNK1 (WNK1) from Oryza sativa subsp. japonica (Rice).